Here is a 364-residue protein sequence, read N- to C-terminus: Putative agmatine deiminase (364 aa).

Cys355 serves as the catalytic Amidino-cysteine intermediate.

The protein belongs to the agmatine deiminase family.

It carries out the reaction agmatine + H2O = N-carbamoylputrescine + NH4(+). This chain is Putative agmatine deiminase, found in Mycoplasma mycoides subsp. mycoides SC (strain CCUG 32753 / NCTC 10114 / PG1).